A 265-amino-acid polypeptide reads, in one-letter code: Hydroxyethylthiazole kinase (265 aa).

Methionine 43 serves as a coordination point for substrate. Residues arginine 119 and serine 165 each coordinate ATP. A substrate-binding site is contributed by alanine 192.

It belongs to the Thz kinase family. Requires Mg(2+) as cofactor.

The catalysed reaction is 5-(2-hydroxyethyl)-4-methylthiazole + ATP = 4-methyl-5-(2-phosphooxyethyl)-thiazole + ADP + H(+). The protein operates within cofactor biosynthesis; thiamine diphosphate biosynthesis; 4-methyl-5-(2-phosphoethyl)-thiazole from 5-(2-hydroxyethyl)-4-methylthiazole: step 1/1. In terms of biological role, catalyzes the phosphorylation of the hydroxyl group of 4-methyl-5-beta-hydroxyethylthiazole (THZ). This Haemophilus influenzae (strain 86-028NP) protein is Hydroxyethylthiazole kinase.